The primary structure comprises 113 residues: Large ribosomal subunit protein uL22 (113 aa).

It belongs to the universal ribosomal protein uL22 family. As to quaternary structure, part of the 50S ribosomal subunit.

Its function is as follows. This protein binds specifically to 23S rRNA; its binding is stimulated by other ribosomal proteins, e.g. L4, L17, and L20. It is important during the early stages of 50S assembly. It makes multiple contacts with different domains of the 23S rRNA in the assembled 50S subunit and ribosome. The globular domain of the protein is located near the polypeptide exit tunnel on the outside of the subunit, while an extended beta-hairpin is found that lines the wall of the exit tunnel in the center of the 70S ribosome. The protein is Large ribosomal subunit protein uL22 of Roseiflexus castenholzii (strain DSM 13941 / HLO8).